A 338-amino-acid chain; its full sequence is P2Y purinoceptor 14 (338 aa).

The Extracellular segment spans residues 1-29 (MNNSTTTDPPNQPCSWNTLITKQIIPVLY). N-linked (GlcNAc...) asparagine glycans are attached at residues Asn2 and Asn3. Residues 30-50 (GMVFITGLLLNGISGWIFFYV) form a helical membrane-spanning segment. Residues 51 to 55 (PSSKS) are Cytoplasmic-facing. The helical transmembrane segment at 56–76 (FIIYLKNIVVADFLMGLTFPF) threads the bilayer. At 77-96 (KVLGDSGLGPWQVNVFVCRV) the chain is on the extracellular side. A disulfide bridge connects residues Cys94 and Cys172. The chain crosses the membrane as a helical span at residues 97–117 (SAVIFYVNMYVSIVFFGLISF). Residues 118 to 139 (DRYYKIVKPLLTSIVQSVNYSK) lie on the Cytoplasmic side of the membrane. Residues 140–160 (LLSVLVWMLMLLLAVPNIILT) traverse the membrane as a helical segment. At 161-188 (NQGVKEVTKIQCMELKNELGRKWHKASN) the chain is on the extracellular side. A helical transmembrane segment spans residues 189 to 209 (YIFVSIFWVVFLLLIVFYTAI). Topologically, residues 210-234 (TRKIFKSHLKSRKNSTSVKRKSSRN) are cytoplasmic. The chain crosses the membrane as a helical span at residues 235 to 255 (IFSIVLVFVVCFVPYHIARIP). The Extracellular segment spans residues 256-278 (YTKSQTEGHYSCRTKETLLYAKE). Residues 279-299 (FTLLLSAANVCLDPIIYFFLC) traverse the membrane as a helical segment. At 300-338 (QPFREVLNKKLHMSLKVQNDLEVSKTKRENAIHESTDTL) the chain is on the cytoplasmic side.

This sequence belongs to the G-protein coupled receptor 1 family.

Its subcellular location is the cell membrane. In terms of biological role, receptor for UDP-glucose coupled to G-proteins. The protein is P2Y purinoceptor 14 (P2ry14) of Mus musculus (Mouse).